The primary structure comprises 422 residues: 2-(3-amino-3-carboxypropyl)histidine synthase subunit 1 (422 aa).

[4Fe-4S] cluster-binding residues include cysteine 128, cysteine 234, and cysteine 363.

Belongs to the DPH1/DPH2 family. DPH1 subfamily. As to quaternary structure, component of the 2-(3-amino-3-carboxypropyl)histidine synthase complex composed of DPH1, DPH2, DPH3 and a NADH-dependent reductase, predominantly CBR1. [4Fe-4S] cluster serves as cofactor.

The protein localises to the cytoplasm. The enzyme catalyses L-histidyl-[translation elongation factor 2] + S-adenosyl-L-methionine = 2-[(3S)-amino-3-carboxypropyl]-L-histidyl-[translation elongation factor 2] + S-methyl-5'-thioadenosine + H(+). The protein operates within protein modification; peptidyl-diphthamide biosynthesis. In terms of biological role, catalyzes the first step of diphthamide biosynthesis, a post-translational modification of histidine which occurs in elongation factor 2. DPH1 and DPH2 transfer a 3-amino-3-carboxypropyl (ACP) group from S-adenosyl-L-methionine (SAM) to a histidine residue, the reaction is assisted by a reduction system comprising DPH3 and a NADH-dependent reductase, predominantly CBR1. This Kluyveromyces lactis (strain ATCC 8585 / CBS 2359 / DSM 70799 / NBRC 1267 / NRRL Y-1140 / WM37) (Yeast) protein is 2-(3-amino-3-carboxypropyl)histidine synthase subunit 1 (DPH1).